Here is a 105-residue protein sequence, read N- to C-terminus: MNDFFSVEPNYYLVLAAVLFTIGAAGVLVRRNAIVLFMCVELMLNAANLTLVTFSRINGDLNGQIIAFFVMVVAAAEVVVGLAIIMAIFRTRRSASVDDANLLKY.

A run of 3 helical transmembrane segments spans residues 9–29, 34–54, and 65–85; these read PNYYLVLAAVLFTIGAAGVLV, IVLFMCVELMLNAANLTLVTF, and IIAFFVMVVAAAEVVVGLAII.

This sequence belongs to the complex I subunit 4L family. NDH-1 is composed of 14 different subunits. Subunits NuoA, H, J, K, L, M, N constitute the membrane sector of the complex.

The protein resides in the cell membrane. It catalyses the reaction a quinone + NADH + 5 H(+)(in) = a quinol + NAD(+) + 4 H(+)(out). Its function is as follows. NDH-1 shuttles electrons from NADH, via FMN and iron-sulfur (Fe-S) centers, to quinones in the respiratory chain. The immediate electron acceptor for the enzyme in this species is believed to be a menaquinone. Couples the redox reaction to proton translocation (for every two electrons transferred, four hydrogen ions are translocated across the cytoplasmic membrane), and thus conserves the redox energy in a proton gradient. In Salinispora arenicola (strain CNS-205), this protein is NADH-quinone oxidoreductase subunit K.